The sequence spans 99 residues: Malonate decarboxylase acyl carrier protein (99 aa).

O-(phosphoribosyl dephospho-coenzyme A)serine is present on Ser-25.

The protein belongs to the MdcC family. Post-translationally, covalently binds the prosthetic group of malonate decarboxylase.

The protein localises to the cytoplasm. In terms of biological role, subunit of malonate decarboxylase, it is an acyl carrier protein to which acetyl and malonyl thioester residues are bound via a 2'-(5''-phosphoribosyl)-3'-dephospho-CoA prosthetic group and turn over during the catalytic mechanism. The polypeptide is Malonate decarboxylase acyl carrier protein (Pseudomonas fluorescens (strain Pf0-1)).